Reading from the N-terminus, the 89-residue chain is Cell division topological specificity factor (89 aa).

The protein belongs to the MinE family.

Its function is as follows. Prevents the cell division inhibition by proteins MinC and MinD at internal division sites while permitting inhibition at polar sites. This ensures cell division at the proper site by restricting the formation of a division septum at the midpoint of the long axis of the cell. This chain is Cell division topological specificity factor, found in Pectobacterium atrosepticum (strain SCRI 1043 / ATCC BAA-672) (Erwinia carotovora subsp. atroseptica).